Here is a 309-residue protein sequence, read N- to C-terminus: Protein MAK16 homolog (309 aa).

The tract at residues 194 to 309 is disordered; that stretch reads EADQFSEEEA…IEEETENQAN (116 aa). Acidic residues-rich tracts occupy residues 195 to 227 and 235 to 270; these read ADQFSEEEADENEEEGEEEMEEEFEDDIDDIED and VEGDDDEDDIDDEYENEPYQDDDEEDDDDDDDDDEE. Residues 275-293 show a composition bias toward basic residues; sequence ITKKRGPTFKPTKKTPQKR. Residues 299–309 show a composition bias toward acidic residues; that stretch reads EIEEETENQAN.

Belongs to the MAK16 family.

It localises to the nucleus. The protein localises to the nucleolus. In Dictyostelium discoideum (Social amoeba), this protein is Protein MAK16 homolog (mak16l).